The primary structure comprises 386 residues: Uroporphyrinogen decarboxylase (386 aa).

Positions 44, 46, 48, 57, 93, 170, 225, and 364 each coordinate coproporphyrinogen I. Coproporphyrinogen III-binding residues include R44, A46, and R48. Coproporphyrinogen III-binding residues include D93, Y170, S225, and H364.

Belongs to the uroporphyrinogen decarboxylase family. As to quaternary structure, homodimer.

It is found in the cytoplasm. The protein localises to the cytosol. It carries out the reaction uroporphyrinogen III + 4 H(+) = coproporphyrinogen III + 4 CO2. It functions in the pathway porphyrin-containing compound metabolism; protoporphyrin-IX biosynthesis; coproporphyrinogen-III from 5-aminolevulinate: step 4/4. Its function is as follows. Catalyzes the decarboxylation of four acetate groups of uroporphyrinogen-III to yield coproporphyrinogen-III. The chain is Uroporphyrinogen decarboxylase from Drosophila virilis (Fruit fly).